The chain runs to 105 residues: Large ribosomal subunit protein uL23 (105 aa).

Belongs to the universal ribosomal protein uL23 family. Part of the 50S ribosomal subunit. Contacts protein L29, and trigger factor when it is bound to the ribosome.

In terms of biological role, one of the early assembly proteins it binds 23S rRNA. One of the proteins that surrounds the polypeptide exit tunnel on the outside of the ribosome. Forms the main docking site for trigger factor binding to the ribosome. The polypeptide is Large ribosomal subunit protein uL23 (Ureaplasma urealyticum serovar 10 (strain ATCC 33699 / Western)).